A 651-amino-acid polypeptide reads, in one-letter code: Peptidoglycan D,D-transpeptidase MrdA (651 aa).

Residues 30–50 form a helical membrane-spanning segment; the sequence is LVAFLGILLLTGVLFTNIYQL. Catalysis depends on Ser-338, which acts as the Acyl-ester intermediate.

It belongs to the transpeptidase family. MrdA subfamily.

Its subcellular location is the cell inner membrane. The enzyme catalyses Preferential cleavage: (Ac)2-L-Lys-D-Ala-|-D-Ala. Also transpeptidation of peptidyl-alanyl moieties that are N-acyl substituents of D-alanine.. Its pathway is cell wall biogenesis; peptidoglycan biosynthesis. Functionally, catalyzes cross-linking of the peptidoglycan cell wall. The polypeptide is Peptidoglycan D,D-transpeptidase MrdA (Haemophilus influenzae (strain ATCC 51907 / DSM 11121 / KW20 / Rd)).